We begin with the raw amino-acid sequence, 716 residues long: 1,4-alpha-glucan branching enzyme GlgB (716 aa).

Asp399 serves as the catalytic Nucleophile. Residue Glu452 is the Proton donor of the active site.

The protein belongs to the glycosyl hydrolase 13 family. GlgB subfamily. As to quaternary structure, monomer.

It carries out the reaction Transfers a segment of a (1-&gt;4)-alpha-D-glucan chain to a primary hydroxy group in a similar glucan chain.. Its pathway is glycan biosynthesis; glycogen biosynthesis. Its function is as follows. Catalyzes the formation of the alpha-1,6-glucosidic linkages in glycogen by scission of a 1,4-alpha-linked oligosaccharide from growing alpha-1,4-glucan chains and the subsequent attachment of the oligosaccharide to the alpha-1,6 position. This is 1,4-alpha-glucan branching enzyme GlgB from Rhodopseudomonas palustris (strain HaA2).